We begin with the raw amino-acid sequence, 185 residues long: UPF0301 protein Csal_0058 (185 aa).

The protein belongs to the UPF0301 (AlgH) family.

This is UPF0301 protein Csal_0058 from Chromohalobacter salexigens (strain ATCC BAA-138 / DSM 3043 / CIP 106854 / NCIMB 13768 / 1H11).